The primary structure comprises 406 residues: COP9 signalosome complex subunit 4 (406 aa).

Residues 197-366 (YRRKFIEAAQ…GIVHFETREP (170 aa)) enclose the PCI domain.

Belongs to the CSN4 family. As to quaternary structure, component of the CSN complex, probably composed of cops1, cops2, cops3, cops4, cops5, cops6, cops7, cops8 and cops9.

Its subcellular location is the cytoplasm. It is found in the nucleus. The protein localises to the cytoplasmic vesicle. The protein resides in the secretory vesicle. It localises to the synaptic vesicle. Functionally, component of the COP9 signalosome complex (CSN), a complex involved in various cellular and developmental processes. The CSN complex is an essential regulator of the ubiquitin (Ubl) conjugation pathway by mediating the deneddylation of the cullin subunits of E3 ligase complexes, leading to modify the Ubl ligase activity. The sequence is that of COP9 signalosome complex subunit 4 (cops4) from Danio rerio (Zebrafish).